The sequence spans 307 residues: MLILNVNHMNITQGMGVAELIEEMGRSGVLGAGRVHRATKLLRGMIDDLEMAIFMSVAGPLVPGGMRRIIRDLIDDGTISALITSGANLTHDLLEAFGGAHYRDYGFDDEKLHQEGIGRIGDVYTRSEDFEVFESENQEIFSSIFSAKPHISIQELIHEIGGHLDDDMSIIRTAHLRGVPIYAPGLIDSMLGLQLWMYTQDNRICLDAVKDMHSLSDLVFSHERIGAIILGGGLPKHYTLASTLLRGGVDAAVQITMDRSETGSLSGAPLEEAKSWAKAQAGSNLVTVVGDATALFPVILAGALSEL.

Lys-278 functions as the Nucleophile in the catalytic mechanism.

Belongs to the deoxyhypusine synthase family. Requires NAD(+) as cofactor.

The enzyme catalyses [eIF5A protein]-L-lysine + spermidine = [eIF5A protein]-deoxyhypusine + propane-1,3-diamine. Its pathway is protein modification; eIF5A hypusination. Its function is as follows. Catalyzes the NAD-dependent oxidative cleavage of spermidine and the subsequent transfer of the butylamine moiety of spermidine to the epsilon-amino group of a specific lysine residue of the eIF-5A precursor protein to form the intermediate deoxyhypusine residue. This is Probable deoxyhypusine synthase (dys) from Methanothermobacter thermautotrophicus (strain ATCC 29096 / DSM 1053 / JCM 10044 / NBRC 100330 / Delta H) (Methanobacterium thermoautotrophicum).